The sequence spans 222 residues: UPF0173 metal-dependent hydrolase Mboo_0816 (222 aa).

Belongs to the UPF0173 family.

This chain is UPF0173 metal-dependent hydrolase Mboo_0816, found in Methanoregula boonei (strain DSM 21154 / JCM 14090 / 6A8).